The primary structure comprises 297 residues: Bifunctional protein FolD (297 aa).

NADP(+) contacts are provided by residues 166–168, serine 191, and isoleucine 232; that span reads GRS.

The protein belongs to the tetrahydrofolate dehydrogenase/cyclohydrolase family. In terms of assembly, homodimer.

The catalysed reaction is (6R)-5,10-methylene-5,6,7,8-tetrahydrofolate + NADP(+) = (6R)-5,10-methenyltetrahydrofolate + NADPH. It carries out the reaction (6R)-5,10-methenyltetrahydrofolate + H2O = (6R)-10-formyltetrahydrofolate + H(+). It functions in the pathway one-carbon metabolism; tetrahydrofolate interconversion. Catalyzes the oxidation of 5,10-methylenetetrahydrofolate to 5,10-methenyltetrahydrofolate and then the hydrolysis of 5,10-methenyltetrahydrofolate to 10-formyltetrahydrofolate. The sequence is that of Bifunctional protein FolD from Phenylobacterium zucineum (strain HLK1).